The chain runs to 267 residues: Imidazole glycerol phosphate synthase subunit HisF (267 aa).

Catalysis depends on residues aspartate 21 and aspartate 140.

This sequence belongs to the HisA/HisF family. As to quaternary structure, heterodimer of HisH and HisF.

The protein localises to the cytoplasm. The enzyme catalyses 5-[(5-phospho-1-deoxy-D-ribulos-1-ylimino)methylamino]-1-(5-phospho-beta-D-ribosyl)imidazole-4-carboxamide + L-glutamine = D-erythro-1-(imidazol-4-yl)glycerol 3-phosphate + 5-amino-1-(5-phospho-beta-D-ribosyl)imidazole-4-carboxamide + L-glutamate + H(+). The protein operates within amino-acid biosynthesis; L-histidine biosynthesis; L-histidine from 5-phospho-alpha-D-ribose 1-diphosphate: step 5/9. In terms of biological role, IGPS catalyzes the conversion of PRFAR and glutamine to IGP, AICAR and glutamate. The HisF subunit catalyzes the cyclization activity that produces IGP and AICAR from PRFAR using the ammonia provided by the HisH subunit. This is Imidazole glycerol phosphate synthase subunit HisF from Bordetella avium (strain 197N).